Reading from the N-terminus, the 86-residue chain is Large ribosomal subunit protein bL31 (86 aa).

Positions 65–86 are disordered; it reads YGMGSANSATSKEQKEEKDSNK. The span at 76–86 shows a compositional bias: basic and acidic residues; that stretch reads KEQKEEKDSNK.

This sequence belongs to the bacterial ribosomal protein bL31 family. Type A subfamily. Part of the 50S ribosomal subunit.

In terms of biological role, binds the 23S rRNA. The sequence is that of Large ribosomal subunit protein bL31 from Prochlorococcus marinus (strain MIT 9312).